Reading from the N-terminus, the 1434-residue chain is MEDHMFGVQQIQPNVISVRLFKRKVGGLGFLVKERVSKPPVIISDLIRGGAAEQSGLIQAGDIILAVNGRPLVDLSYDSALEVLRGIASETHVVLILRGPEGFTTHLETTFTGDGTPKTIRVTQPLGPPTKAVDLSHQPPAGKEQPLAVDGASGPGNGPQHAYDDGQEAGSLPHANGLAPRPPGQDPAKKATRVSLQGRGENNELLKEIEPVLSLLTSGSRGVKGGAPAKAEMKDMGIQVDRDLDGKSHKPLPLGVENDRVFNDLWGKGNVPVVLNNPYSEKEQPPTSGKQSPTKNGSPSKCPRFLKVKNWETEVVLTDTLHLKSTLETGCTEYICMGSIMHPSQHARRPEDVRTKGQLFPLAKEFIDQYYSSIKRFGSKAHMERLEEVNKEIDTTSTYQLKDTELIYGAKHAWRNASRCVGRIQWSKLQVFDARDCTTAHGMFNYICNHVKYATNKGNLRSAITIFPQRTDGKHDFRVWNSQLIRYAGYKQPDGSTLGDPANVQFTEICIQQGWKPPRGRFDVLPLLLQANGNDPELFQIPPELVLEVPIRHPKFEWFKDLGLKWYGLPAVSNMLLEIGGLEFSACPFSGWYMGTEIGVRDYCDNSRYNILEEVAKKMNLDMRKTSSLWKDQALVEINIAVLYSFQSDKVTIVDHHSATESFIKHMENEYRCRGGCPADWVWIVPPMSGSITPVFHQEMLNYRLTPSFEYQPDPWNTHVWKGTNGTPTKRRAIGFKKLAEAVKFSAKLMGQAMAKRVKATILYATETGKSQAYAKTLCEIFKHAFDAKVMSMEEYDIVHLEHETLVLVVTSTFGNGDPPENGEKFGCALMEMRHPNSVQEERKSYKVRFNSVSSYSDSQKSSGDGPDLRDNFESAGPLANVRFSVFGLGSRAYPHFCAFGHAVDTLLEELGGERILKMREGDELCGQEEAFRTWAKKVFKAACDVFCVGDDVNIEKANNSLISNDRSWKRNKFRLTFVAEAPELTQGLSNVHKKRVSAARLLSRQNLQSPKSSRSTIFVRLHTNGSQELQYQPGDHLGVFPGNHEDLVNALIERLEDAPPVNQMVKVELLEERNTALGVISNWTDELRLPPCTIFQAFKYYLDITTPPTPLQLQQFASLATSEKEKQRLLVLSKGLQEYEEWKWGKNPTIVEVLEEFPSIQMPATLLLTQLSLLQPRYYSISSSPDMYPDEVHLTVAIVSYRTRDGEGPIHHGVCSSWLNRIQADELVPCFVRGAPSFHLPRNPQVPCILVGPGTGIAPFRSFWQQRQFDIQHKGMNPCPMVLVFGCRQSKIDHIYREETLQAKNKGVFRELYTAYSREPDKPKKYVQDILQEQLAESVYRALKEQGGHIYVCGDVTMAADVLKAIQRIMTQQGKLSAEDAGVFISRMRDDNRYHEDIFGVTLRTYEVTNRLRSESIAFIEESKKDTDEVFSS.

The interval 1-205 (MEDHMFGVQQ…LQGRGENNEL (205 aa)) is interaction with NOSIP. In terms of domain architecture, PDZ spans 17–99 (SVRLFKRKVG…ETHVVLILRG (83 aa)). Disordered regions lie at residues 112–192 (TGDG…KKAT) and 276–302 (NNPYSEKEQPPTSGKQSPTKNGSPSKC). Residues 163 to 245 (YDDGQEAGSL…MGIQVDRDLD (83 aa)) are interaction with DYNLL1/PIN. Residues 285-299 (PPTSGKQSPTKNGSP) show a composition bias toward polar residues. Residue Ser-339 participates in (6R)-L-erythro-5,6,7,8-tetrahydrobiopterin binding. Cys-420 is a binding site for heme b. L-arginine is bound by residues Gln-483, Trp-592, Tyr-593, and Glu-597. Positions 682, 683, and 696 each coordinate (6R)-L-erythro-5,6,7,8-tetrahydrobiopterin. Tyr-711 is a heme b binding site. Positions 730–750 (KRRAIGFKKLAEAVKFSAKLM) are calmodulin-binding. In terms of domain architecture, Flavodoxin-like spans 760–940 (ATILYATETG…AFRTWAKKVF (181 aa)). The FMN site is built by Thr-766, Glu-767, Thr-768, Lys-770, Ser-771, Ser-812, Thr-813, and Gly-817. Residues Ser-852, Ser-862, and Ser-863 each carry the phosphoserine modification. Positions 891, 896, 898, 924, and 928 each coordinate FMN. Residues 995–1242 (KRVSAARLLS…VRGAPSFHLP (248 aa)) enclose the FAD-binding FR-type domain. Arg-1015 lines the NADP(+) pocket. FAD contacts are provided by His-1037, Arg-1178, Tyr-1179, Tyr-1180, Ser-1181, Thr-1196, and Ala-1198. Ser-1201 is a binding site for NADP(+). FAD contacts are provided by Tyr-1202, Val-1215, Cys-1216, and Ser-1217. Residues Thr-1256, Arg-1289, Ser-1318, Arg-1319, Lys-1325, Tyr-1327, Gln-1329, Asp-1362, Thr-1403, and Arg-1405 each contribute to the NADP(+) site.

It belongs to the NOS family. As to quaternary structure, homodimer. Interacts with DLG4; the interaction possibly being prevented by the association between NOS1 and CAPON. Forms a ternary complex with CAPON and RASD1. Forms a ternary complex with CAPON and SYN1. Interacts with ZDHHC23. Interacts with NOSIP; which may impair its synaptic location. Interacts with HTR4. Interacts with SLC6A4. Interacts with VAC14. Interacts (via N-terminal domain) with DLG4 (via N-terminal tandem pair of PDZ domains). Interacts with SLC6A4. Forms a complex with ASL, ASS1 and SLC7A1; the complex regulates cell-autonomous L-arginine synthesis and citrulline recycling while channeling extracellular L-arginine to nitric oxide synthesis pathway. Interacts with DMD; localizes NOS1 to sarcolemma in muscle cells. Interacts with DYNLL1; inhibits the nitric oxide synthase activity. Requires heme b as cofactor. FAD is required as a cofactor. FMN serves as cofactor. The cofactor is (6R)-L-erythro-5,6,7,8-tetrahydrobiopterin. Post-translationally, ubiquitinated; mediated by STUB1/CHIP in the presence of Hsp70 and Hsp40 (in vitro). Isoform 1 is ubiquitously expressed: detected in skeletal muscle and brain, also in testis, lung and kidney, and at low levels in heart, adrenal gland and retina. Not detected in the platelets. Isoform 3 is expressed only in testis. Isoform 4 is detected in testis, skeletal muscle, lung, and kidney, at low levels in the brain, but not in the heart and adrenal gland.

It localises to the cell membrane. The protein resides in the sarcolemma. Its subcellular location is the cell projection. It is found in the dendritic spine. It catalyses the reaction 2 L-arginine + 3 NADPH + 4 O2 + H(+) = 2 L-citrulline + 2 nitric oxide + 3 NADP(+) + 4 H2O. Stimulated by calcium/calmodulin. Inhibited by DYNLL1 that prevents the dimerization of the protein. Inhibited by NOSIP. Functionally, produces nitric oxide (NO) which is a messenger molecule with diverse functions throughout the body. In the brain and peripheral nervous system, NO displays many properties of a neurotransmitter. Probably has nitrosylase activity and mediates cysteine S-nitrosylation of cytoplasmic target proteins such SRR. In Homo sapiens (Human), this protein is Nitric oxide synthase 1.